A 329-amino-acid chain; its full sequence is uncharacterized protein (329 aa).

The next 10 helical transmembrane spans lie at 9-29 (LMGL…NVIV), 53-73 (SHSF…MALI), 105-125 (FLMF…PTGI), 126-146 (AITL…RLFN), 154-174 (WLVI…AYGG), 179-199 (LVLG…YTVF), 210-230 (VPFT…CLII), 240-260 (WLAI…GHVL), 273-293 (AAII…LAIQ), and 296-316 (LTNI…LLNY). EamA domains are found at residues 103–169 (CGFL…LTIP) and 191–316 (IVYA…LLNY).

It belongs to the EamA transporter family.

It is found in the cell membrane. This is an uncharacterized protein from Synechocystis sp. (strain ATCC 27184 / PCC 6803 / Kazusa).